The chain runs to 400 residues: MTTFGTPLSPSATRVLLLGSGELGKEVAIELQRFGVEVIAADRYANAPAMQVAHRSHVLDMLDPAALRALIASEQPHLIVPEIEAIHTETLVALEREQGQKVIPTARAARLTMDREGIRRLAAETLCLPTSPYRFVDTVEEYRNAIAAVGVPCVVKPVMSSSGKGQSTLRSEADIDAAWAYAQTGGRAGAGRCIVEGFIDFDYEITLLTVRHAGGTSYCDPIGHWQQDGDYRESWQPQPMSAAALRRSQEIAKAITDELGGWGLFGVELFVKGDEVWFSEVSPRPHDTGLVTLVSQDLSEFALHARAILGLPVGAQDGGVIRQAGPSASCALLAHGNGVPVFDNVAEALRDPDTALRLFGKPRVDGHRRVGVTLARADSIDAAREKARVAAAALTIQLQA.

Residues 22–23 (EL) and Glu82 contribute to the N(1)-(5-phospho-beta-D-ribosyl)glycinamide site. ATP contacts are provided by residues Arg115, Lys156, 161–166 (SSGKGQ), 196–199 (EGFI), and Glu204. Residues 120–309 (RLAAETLCLP…EFALHARAIL (190 aa)) form the ATP-grasp domain. Mg(2+)-binding residues include Glu268 and Glu280. N(1)-(5-phospho-beta-D-ribosyl)glycinamide contacts are provided by residues Asp287, Lys361, and 368-369 (RR).

It belongs to the PurK/PurT family. In terms of assembly, homodimer.

It carries out the reaction N(1)-(5-phospho-beta-D-ribosyl)glycinamide + formate + ATP = N(2)-formyl-N(1)-(5-phospho-beta-D-ribosyl)glycinamide + ADP + phosphate + H(+). Its pathway is purine metabolism; IMP biosynthesis via de novo pathway; N(2)-formyl-N(1)-(5-phospho-D-ribosyl)glycinamide from N(1)-(5-phospho-D-ribosyl)glycinamide (formate route): step 1/1. Involved in the de novo purine biosynthesis. Catalyzes the transfer of formate to 5-phospho-ribosyl-glycinamide (GAR), producing 5-phospho-ribosyl-N-formylglycinamide (FGAR). Formate is provided by PurU via hydrolysis of 10-formyl-tetrahydrofolate. The chain is Formate-dependent phosphoribosylglycinamide formyltransferase from Xanthomonas euvesicatoria pv. vesicatoria (strain 85-10) (Xanthomonas campestris pv. vesicatoria).